We begin with the raw amino-acid sequence, 503 residues long: Maturase K (503 aa).

Belongs to the intron maturase 2 family. MatK subfamily.

It is found in the plastid. It localises to the chloroplast. In terms of biological role, usually encoded in the trnK tRNA gene intron. Probably assists in splicing its own and other chloroplast group II introns. In Vicia faba (Broad bean), this protein is Maturase K.